Reading from the N-terminus, the 137-residue chain is Large-conductance mechanosensitive channel (137 aa).

3 consecutive transmembrane segments (helical) span residues 15–35 (IDLA…NSIV), 38–58 (ILMP…MFIQ), and 80–100 (GNFI…FLFV).

This sequence belongs to the MscL family. Homopentamer.

The protein resides in the cell inner membrane. Functionally, channel that opens in response to stretch forces in the membrane lipid bilayer. May participate in the regulation of osmotic pressure changes within the cell. This chain is Large-conductance mechanosensitive channel, found in Bartonella quintana (strain Toulouse) (Rochalimaea quintana).